Reading from the N-terminus, the 336-residue chain is Fructose-1,6-bisphosphatase class 1 (336 aa).

Residues Glu98, Asp117, Leu119, and Asp120 each contribute to the Mg(2+) site. Substrate contacts are provided by residues 120-123, Asn210, and Lys276; that span reads DGSS. Glu282 serves as a coordination point for Mg(2+).

The protein belongs to the FBPase class 1 family. As to quaternary structure, homotetramer. Mg(2+) is required as a cofactor.

It localises to the cytoplasm. The catalysed reaction is beta-D-fructose 1,6-bisphosphate + H2O = beta-D-fructose 6-phosphate + phosphate. It participates in carbohydrate biosynthesis; gluconeogenesis. This Caulobacter vibrioides (strain ATCC 19089 / CIP 103742 / CB 15) (Caulobacter crescentus) protein is Fructose-1,6-bisphosphatase class 1.